A 311-amino-acid polypeptide reads, in one-letter code: HPr kinase/phosphorylase (311 aa).

Catalysis depends on residues H136 and K157. 151–158 is an ATP binding site; that stretch reads GDSGIGKS. S158 contacts Mg(2+). The active-site Proton acceptor; for phosphorylation activity. Proton donor; for dephosphorylation activity is D175. The tract at residues 199–208 is important for the catalytic mechanism of both phosphorylation and dephosphorylation; the sequence is LEIRGLGIIN. E200 is a Mg(2+) binding site. The active site involves R241. The tract at residues 262–267 is important for the catalytic mechanism of dephosphorylation; that stretch reads PVRPGR.

This sequence belongs to the HPrK/P family. Homohexamer. Mg(2+) is required as a cofactor.

It catalyses the reaction [HPr protein]-L-serine + ATP = [HPr protein]-O-phospho-L-serine + ADP + H(+). The catalysed reaction is [HPr protein]-O-phospho-L-serine + phosphate + H(+) = [HPr protein]-L-serine + diphosphate. Functionally, catalyzes the ATP- as well as the pyrophosphate-dependent phosphorylation of a specific serine residue in HPr, a phosphocarrier protein of the phosphoenolpyruvate-dependent sugar phosphotransferase system (PTS). HprK/P also catalyzes the pyrophosphate-producing, inorganic phosphate-dependent dephosphorylation (phosphorolysis) of seryl-phosphorylated HPr (P-Ser-HPr). The two antagonistic activities of HprK/P are regulated by several intracellular metabolites, which change their concentration in response to the absence or presence of rapidly metabolisable carbon sources (glucose, fructose, etc.) in the growth medium. Therefore, by controlling the phosphorylation state of HPr, HPrK/P is a sensor enzyme that plays a major role in the regulation of carbon metabolism and sugar transport: it mediates carbon catabolite repression (CCR), and regulates PTS-catalyzed carbohydrate uptake and inducer exclusion. This chain is HPr kinase/phosphorylase, found in Staphylococcus haemolyticus (strain JCSC1435).